The primary structure comprises 318 residues: Thioredoxin reductase (318 aa).

Position 36–43 (36–43) interacts with FAD; sequence TGMQQGGQ. Cysteines 136 and 139 form a disulfide. An FAD-binding site is contributed by 286–295; sequence DVMDHNYRQA.

This sequence belongs to the class-II pyridine nucleotide-disulfide oxidoreductase family. Homodimer. FAD serves as cofactor.

It localises to the cytoplasm. The enzyme catalyses [thioredoxin]-dithiol + NADP(+) = [thioredoxin]-disulfide + NADPH + H(+). This chain is Thioredoxin reductase (trxB), found in Vibrio cholerae serotype O1 (strain ATCC 39315 / El Tor Inaba N16961).